A 570-amino-acid chain; its full sequence is Periplasmic trehalase (570 aa).

The first 34 residues, 1–34 (MIPPEIRRSVLLQKAIKLALAGTLLTFASFSATA), serve as a signal peptide directing secretion. Residues arginine 159, 166–167 (WD), asparagine 203, 212–214 (RSQ), 284–286 (RPE), and glycine 317 contribute to the substrate site. Active-site proton donor/acceptor residues include aspartate 319 and glutamate 503. Residue glutamate 518 participates in substrate binding. Residues 544-570 (KPCDSVPSTRPASLSATPTKTPSAATQ) form a disordered region. Positions 554-570 (PASLSATPTKTPSAATQ) are enriched in low complexity.

It belongs to the glycosyl hydrolase 37 family. In terms of assembly, monomer.

It localises to the periplasm. It catalyses the reaction alpha,alpha-trehalose + H2O = alpha-D-glucose + beta-D-glucose. In terms of biological role, provides the cells with the ability to utilize trehalose at high osmolarity by splitting it into glucose molecules that can subsequently be taken up by the phosphotransferase-mediated uptake system. This chain is Periplasmic trehalase, found in Salmonella paratyphi A (strain AKU_12601).